A 523-amino-acid polypeptide reads, in one-letter code: Factor arrest protein 8 (523 aa).

Residues 26–76 adopt a coiled-coil conformation; sequence TKNERDRITWELERSEMKARIAELEGENRDLKHQLNQIQSKAVSPEGEKEE. Residues 61 to 80 are disordered; sequence NQIQSKAVSPEGEKEEKHVP. Residues 71–80 are compositionally biased toward basic and acidic residues; sequence EGEKEEKHVP. Ser-115 carries the post-translational modification Phosphoserine. Position 132 is a phosphothreonine (Thr-132). Residues 150 to 171 form a disordered region; that stretch reads ALLDTKPNPKQGPSESPSPTKV. Positions 160–171 are enriched in polar residues; the sequence is QGPSESPSPTKV.

Component of a complex at least composed of FAR3, FAR7, FAR8, FAR10, FAR11 and VPS64.

It localises to the cytoplasm. Its subcellular location is the endoplasmic reticulum. In terms of biological role, participates in the control of the reentry into the cell cycle following pheromone treatment. The polypeptide is Factor arrest protein 8 (FAR8) (Saccharomyces cerevisiae (strain ATCC 204508 / S288c) (Baker's yeast)).